The sequence spans 147 residues: Small ribosomal subunit protein uS5 (147 aa).

Positions 9–72 (FEEVIVDIGR…DDAFKNIIHV (64 aa)) constitute an S5 DRBM domain.

The protein belongs to the universal ribosomal protein uS5 family. As to quaternary structure, part of the 30S ribosomal subunit. Contacts proteins S4 and S8.

With S4 and S12 plays an important role in translational accuracy. Its function is as follows. Located at the back of the 30S subunit body where it stabilizes the conformation of the head with respect to the body. The polypeptide is Small ribosomal subunit protein uS5 (Campylobacter curvus (strain 525.92)).